A 504-amino-acid chain; its full sequence is Maturase K (504 aa).

It belongs to the intron maturase 2 family. MatK subfamily.

It localises to the plastid. Its subcellular location is the chloroplast. Usually encoded in the trnK tRNA gene intron. Probably assists in splicing its own and other chloroplast group II introns. This Wollastonia biflora (Beach sunflower) protein is Maturase K.